We begin with the raw amino-acid sequence, 160 residues long: MKDITPDICDQHEDKVTLLNLPLQNFGQKAAFFGEIVTVRCYHDNSKVRDVLSENGKGKVLVVDGHGSCQKALLGDQLAILAIENDWEGVIVFGAVRDVAQMSQMELGIKALGTSPFKTEKRGAGEVNVTLTMHNQMVQPKDYIYADWNGILISKELLQF.

Substrate-binding positions include 75–78 and Arg97; that span reads GDQL. Asp98 contributes to the a divalent metal cation binding site.

This sequence belongs to the class II aldolase/RraA-like family. In terms of assembly, homotrimer. It depends on a divalent metal cation as a cofactor.

The catalysed reaction is 4-hydroxy-4-methyl-2-oxoglutarate = 2 pyruvate. It catalyses the reaction oxaloacetate + H(+) = pyruvate + CO2. Its function is as follows. Catalyzes the aldol cleavage of 4-hydroxy-4-methyl-2-oxoglutarate (HMG) into 2 molecules of pyruvate. Also contains a secondary oxaloacetate (OAA) decarboxylase activity due to the common pyruvate enolate transition state formed following C-C bond cleavage in the retro-aldol and decarboxylation reactions. The polypeptide is Putative 4-hydroxy-4-methyl-2-oxoglutarate aldolase (Vibrio vulnificus (strain YJ016)).